The primary structure comprises 274 residues: uncharacterized protein (274 aa).

Residues 1–17 form the signal peptide; the sequence is MKKLLAGFLTLSLALAA. Cys-18 carries the N-palmitoyl cysteine lipid modification. Cys-18 is lipidated: S-diacylglycerol cysteine. The segment at 18-169 is disordered; that stretch reads CSNGSDDDSS…DANNGASSAN (152 aa). Over residues 25 to 76 the composition is skewed to basic and acidic residues; that stretch reads DSSKKDDSSKDNQSSDDKSKDSKNDDKKNNDSDKDKDNNSDSDKNSDSKSDD. A compositionally biased stretch (low complexity) spans 91–169; the sequence is SDNASGSDSS…DANNGASSAN (79 aa).

The protein resides in the cell membrane. This is an uncharacterized protein from Staphylococcus saprophyticus subsp. saprophyticus (strain ATCC 15305 / DSM 20229 / NCIMB 8711 / NCTC 7292 / S-41).